Consider the following 81-residue polypeptide: Conotoxin Vc6.7 (81 aa).

An N-terminal signal peptide occupies residues 1–19 (MEKLTILLLVAAVLMSIQA). A propeptide spanning residues 20-44 (VNQEKHQRAKMNLLSKRKPPAERWW) is cleaved from the precursor. Disulfide bonds link Cys-49–Cys-63, Cys-56–Cys-67, and Cys-62–Cys-72.

Belongs to the conotoxin O2 superfamily. As to expression, expressed by the venom duct.

Its subcellular location is the secreted. Inhibits voltage-gated ion channels. This is Conotoxin Vc6.7 from Conus victoriae (Queen Victoria cone).